The following is a 362-amino-acid chain: Biotin synthase (362 aa).

The 228-residue stretch at 46–273 (NEVQVSTLLS…ASHVRLSAGR (228 aa)) folds into the Radical SAM core domain. [4Fe-4S] cluster-binding residues include Cys-61, Cys-65, and Cys-68. Cys-105, Cys-136, Cys-196, and Arg-268 together coordinate [2Fe-2S] cluster.

It belongs to the radical SAM superfamily. Biotin synthase family. As to quaternary structure, homodimer. The cofactor is [4Fe-4S] cluster. It depends on [2Fe-2S] cluster as a cofactor.

It catalyses the reaction (4R,5S)-dethiobiotin + (sulfur carrier)-SH + 2 reduced [2Fe-2S]-[ferredoxin] + 2 S-adenosyl-L-methionine = (sulfur carrier)-H + biotin + 2 5'-deoxyadenosine + 2 L-methionine + 2 oxidized [2Fe-2S]-[ferredoxin]. It participates in cofactor biosynthesis; biotin biosynthesis; biotin from 7,8-diaminononanoate: step 2/2. In terms of biological role, catalyzes the conversion of dethiobiotin (DTB) to biotin by the insertion of a sulfur atom into dethiobiotin via a radical-based mechanism. This is Biotin synthase from Aeromonas salmonicida (strain A449).